Consider the following 422-residue polypeptide: 5'-deoxyadenosine deaminase (422 aa).

Zn(2+) is bound by residues His57 and His59. Glu86 and His178 together coordinate substrate. His205 is a Zn(2+) binding site. Positions 208 and 294 each coordinate substrate. A Zn(2+)-binding site is contributed by Asp294.

It belongs to the metallo-dependent hydrolases superfamily. MTA/SAH deaminase family. As to quaternary structure, homotetramer. Zn(2+) serves as cofactor.

The catalysed reaction is 5'-deoxyadenosine + H2O + H(+) = 5'-deoxyinosine + NH4(+). It carries out the reaction S-adenosyl-L-homocysteine + H2O + H(+) = S-inosyl-L-homocysteine + NH4(+). The enzyme catalyses S-methyl-5'-thioadenosine + H2O + H(+) = S-methyl-5'-thioinosine + NH4(+). It catalyses the reaction adenosine + H2O + H(+) = inosine + NH4(+). It functions in the pathway amino-acid biosynthesis; S-adenosyl-L-methionine biosynthesis. Functionally, catalyzes the deamination of three SAM-derived enzymatic products, namely 5'-deoxyadenosine, S-adenosyl-L-homocysteine, and 5'-methylthioadenosine, to produce the inosine analogs. Can also deaminate adenosine. The preferred substrate for this enzyme is 5'-deoxyadenosine, but all these substrates are efficiently deaminated. Likely functions in a S-adenosyl-L-methionine (SAM) recycling pathway from S-adenosyl-L-homocysteine (SAH) produced from SAM-dependent methylation reactions. May also be involved in the recycling of 5'-deoxyadenosine, whereupon the 5'-deoxyribose moiety of 5'-deoxyinosine is further metabolized to deoxyhexoses used for the biosynthesis of aromatic amino acids in methanogens. This Methanococcus maripaludis (strain DSM 14266 / JCM 13030 / NBRC 101832 / S2 / LL) protein is 5'-deoxyadenosine deaminase.